A 332-amino-acid polypeptide reads, in one-letter code: Ornithine carbamoyltransferase, catabolic (332 aa).

Residues 60–63, Gln-87, Arg-111, and 138–141 each bind carbamoyl phosphate; these read STRT and HPTQ. L-ornithine-binding positions include Asn-170, Asp-230, and 234–235; that span reads SM. Residues 271–272 and Arg-316 contribute to the carbamoyl phosphate site; that span reads CL.

This sequence belongs to the aspartate/ornithine carbamoyltransferase superfamily. OTCase family.

Its subcellular location is the cytoplasm. The enzyme catalyses carbamoyl phosphate + L-ornithine = L-citrulline + phosphate + H(+). The protein operates within amino-acid degradation; L-arginine degradation via ADI pathway; carbamoyl phosphate from L-arginine: step 2/2. Reversibly catalyzes the transfer of the carbamoyl group from carbamoyl phosphate (CP) to the N(epsilon) atom of ornithine (ORN) to produce L-citrulline. This chain is Ornithine carbamoyltransferase, catabolic, found in Bacillus thuringiensis subsp. konkukian (strain 97-27).